The following is an 882-amino-acid chain: Valine--tRNA ligase (882 aa).

The 'HIGH' region motif lies at 52–62 (PNVTGSLHMGH). The 'KMSKS' region signature appears at 539-543 (KMSKS). An ATP-binding site is contributed by K542. Positions 816-882 (IDVAAERRRL…RINARLAVLQ (67 aa)) form a coiled coil.

Belongs to the class-I aminoacyl-tRNA synthetase family. ValS type 1 subfamily. Monomer.

The protein localises to the cytoplasm. The catalysed reaction is tRNA(Val) + L-valine + ATP = L-valyl-tRNA(Val) + AMP + diphosphate. Its function is as follows. Catalyzes the attachment of valine to tRNA(Val). As ValRS can inadvertently accommodate and process structurally similar amino acids such as threonine, to avoid such errors, it has a 'posttransfer' editing activity that hydrolyzes mischarged Thr-tRNA(Val) in a tRNA-dependent manner. The polypeptide is Valine--tRNA ligase (Mycolicibacterium paratuberculosis (strain ATCC BAA-968 / K-10) (Mycobacterium paratuberculosis)).